A 232-amino-acid chain; its full sequence is 5'-methylthioadenosine/S-adenosylhomocysteine nucleosidase (232 aa).

Glu14 serves as the catalytic Proton acceptor. Residues Gly80, Val154, and 175–176 each bind substrate; that span reads ME. Residue Asp199 is the Proton donor of the active site.

The protein belongs to the PNP/UDP phosphorylase family. MtnN subfamily.

The catalysed reaction is S-adenosyl-L-homocysteine + H2O = S-(5-deoxy-D-ribos-5-yl)-L-homocysteine + adenine. It carries out the reaction S-methyl-5'-thioadenosine + H2O = 5-(methylsulfanyl)-D-ribose + adenine. The enzyme catalyses 5'-deoxyadenosine + H2O = 5-deoxy-D-ribose + adenine. The protein operates within amino-acid biosynthesis; L-methionine biosynthesis via salvage pathway; S-methyl-5-thio-alpha-D-ribose 1-phosphate from S-methyl-5'-thioadenosine (hydrolase route): step 1/2. Its function is as follows. Catalyzes the irreversible cleavage of the glycosidic bond in both 5'-methylthioadenosine (MTA) and S-adenosylhomocysteine (SAH/AdoHcy) to adenine and the corresponding thioribose, 5'-methylthioribose and S-ribosylhomocysteine, respectively. Also cleaves 5'-deoxyadenosine, a toxic by-product of radical S-adenosylmethionine (SAM) enzymes, into 5-deoxyribose and adenine. The protein is 5'-methylthioadenosine/S-adenosylhomocysteine nucleosidase of Haemophilus ducreyi (strain 35000HP / ATCC 700724).